The chain runs to 1011 residues: Vacuolar membrane protease (1011 aa).

Over 1–9 the chain is Cytoplasmic; the sequence is MSNPFAFRS. A helical transmembrane segment spans residues 10–30; that stretch reads AQVTFWTTVVYLALLVPLVVI. Topologically, residues 31–378 are vacuolar; sequence NEGVPPVQPD…TFVLFGLRGM (348 aa). N50 and N106 each carry an N-linked (GlcNAc...) asparagine glycan. Residues H159 and D171 each coordinate Zn(2+). Catalysis depends on E205, which acts as the Proton acceptor. Positions 206, 231, and 304 each coordinate Zn(2+). The N-linked (GlcNAc...) asparagine glycan is linked to N331. A helical membrane pass occupies residues 379-399; it reads FAWSLTVLIVGPLTLFGMMYL. Topologically, residues 400-439 are cytoplasmic; sequence VHKQGKGYAFHTKLRATSDSSSEDGDDEDGEVIRLGGWKG. The helical transmembrane segment at 440 to 460 threads the bilayer; sequence FFRFPFALIVAGALVTGAALL. Residues 461 to 471 are Vacuolar-facing; the sequence is LRKMNPFIIYS. Residues 472–492 form a helical membrane-spanning segment; it reads SEYAVWAMMISLFYFGFWLIM. Residues 493-505 lie on the Cytoplasmic side of the membrane; the sequence is RGSSYTRPSALHR. The helical transmembrane segment at 506-526 threads the bilayer; that stretch reads LYVHIWLFILGWVALVFATVL. The Vacuolar segment spans residues 527-536; the sequence is EDRMRIASGY. A helical membrane pass occupies residues 537-557; that stretch reads IFVFWESQVFLATLVAVCELF. Topologically, residues 558 to 682 are cytoplasmic; the sequence is SLPRKIDFAR…WSGPMVTSTW (125 aa). Polar residues predominate over residues 595–609; that stretch reads EATSPQRAGQSSNSP. 2 disordered regions span residues 595–627 and 650–671; these read EATS…LFRK and IMDS…EGEQ. The segment covering 610–622 has biased composition (acidic residues); it reads QEDDEDDVPDEET. A helical membrane pass occupies residues 683 to 703; the sequence is ILQFLLLGPFMVILGGQVGLL. The Vacuolar segment spans residues 704–719; sequence LTSAVNQTGVDGSSLL. A glycan (N-linked (GlcNAc...) asparagine) is linked at N709. The chain crosses the membrane as a helical span at residues 720–740; sequence APYLMIAALSAILLMPLSPFI. Residues 741–747 lie on the Cytoplasmic side of the membrane; it reads HRVTKHV. Residues 748–768 traverse the membrane as a helical segment; that stretch reads PLFLLAVAFATLIYSLVAFPF. Over 769–1011 the chain is Vacuolar; that stretch reads SPRAPYKTFF…LVEGSKAFKV (243 aa). N-linked (GlcNAc...) asparagine glycosylation occurs at N872.

The protein belongs to the peptidase M28 family. Requires Zn(2+) as cofactor.

Its subcellular location is the vacuole membrane. In terms of biological role, may be involved in vacuolar sorting and osmoregulation. The protein is Vacuolar membrane protease of Pyricularia oryzae (strain 70-15 / ATCC MYA-4617 / FGSC 8958) (Rice blast fungus).